The primary structure comprises 243 residues: MTPVSSRLQPLIIPCVDIQSGRAVRLYEGDPDRETVYFESPLEAARHWAALGAGLVHLVDLDAATGRGENRAVITQITAELGVPVEVGGGIRDRAAAEALLDAGVGRVVIGTAAVKNPALVRELIAAHGPSRVVVSLDARGLDVAIHGWAEGSGVSVAELAPLLAEAGLETLIFTDVTRDGTLRGLDRDLMRQVRQLWSNTLIVGGGVATLDDVRLLAEEGIQGAIVGRAIYEGTLVYPVTGL.

Aspartate 17 acts as the Proton acceptor in catalysis. The active-site Proton donor is the aspartate 138.

It belongs to the HisA/HisF family.

The protein localises to the cytoplasm. The enzyme catalyses 1-(5-phospho-beta-D-ribosyl)-5-[(5-phospho-beta-D-ribosylamino)methylideneamino]imidazole-4-carboxamide = 5-[(5-phospho-1-deoxy-D-ribulos-1-ylimino)methylamino]-1-(5-phospho-beta-D-ribosyl)imidazole-4-carboxamide. It participates in amino-acid biosynthesis; L-histidine biosynthesis; L-histidine from 5-phospho-alpha-D-ribose 1-diphosphate: step 4/9. This Deinococcus geothermalis (strain DSM 11300 / CIP 105573 / AG-3a) protein is 1-(5-phosphoribosyl)-5-[(5-phosphoribosylamino)methylideneamino] imidazole-4-carboxamide isomerase.